A 235-amino-acid polypeptide reads, in one-letter code: MDKENLISLEKILGFNFNNPSILLSAITHPSYAFEHPEEGIEHNERLEFLGDAVLELFISDYLFRTFPQKSEGDLTKLRSRLVCAESLYELAFKINLDKFLRLGKGEFKAGGNQRMSNLANAVEAVIGAVYFDCGIEAAFSFITRLYGEKLKPENLEQLPKDEKTTLQELLQKEKNNVLRYEILLEEGPPHQKIFTAGVIINDKLIATGRGKSKKEAEQEAAKKALELLKNEKEV.

An RNase III domain is found at 6 to 135 (LISLEKILGF…VIGAVYFDCG (130 aa)). Glutamate 48 is a Mg(2+) binding site. Aspartate 52 is a catalytic residue. 2 residues coordinate Mg(2+): asparagine 121 and glutamate 124. Residue glutamate 124 is part of the active site. Positions 162–231 (DEKTTLQELL…AKKALELLKN (70 aa)) constitute a DRBM domain.

Belongs to the ribonuclease III family. In terms of assembly, homodimer. Mg(2+) serves as cofactor.

Its subcellular location is the cytoplasm. It carries out the reaction Endonucleolytic cleavage to 5'-phosphomonoester.. Digests double-stranded RNA. Involved in the processing of primary rRNA transcript to yield the immediate precursors to the large and small rRNAs (23S and 16S). Processes some mRNAs, and tRNAs when they are encoded in the rRNA operon. Processes pre-crRNA and tracrRNA of type II CRISPR loci if present in the organism. This is Ribonuclease 3 from Carboxydothermus hydrogenoformans (strain ATCC BAA-161 / DSM 6008 / Z-2901).